Reading from the N-terminus, the 211-residue chain is Phosphoserine phosphatase (211 aa).

D11 acts as the Nucleophile in catalysis. Mg(2+)-binding residues include D11 and D13. Residue D13 is the Proton donor of the active site. Residues E20, R56, S99–G100, and K144 each bind substrate. A Mg(2+)-binding site is contributed by D167. Residue N170 coordinates substrate.

It belongs to the HAD-like hydrolase superfamily. SerB family. Requires Mg(2+) as cofactor.

The catalysed reaction is O-phospho-L-serine + H2O = L-serine + phosphate. The enzyme catalyses O-phospho-D-serine + H2O = D-serine + phosphate. Its pathway is amino-acid biosynthesis; L-serine biosynthesis; L-serine from 3-phospho-D-glycerate: step 3/3. The sequence is that of Phosphoserine phosphatase from Methanocaldococcus jannaschii (strain ATCC 43067 / DSM 2661 / JAL-1 / JCM 10045 / NBRC 100440) (Methanococcus jannaschii).